Reading from the N-terminus, the 943-residue chain is Isoleucine--tRNA ligase (943 aa).

The 'HIGH' region signature appears at 59-69 (PYANGQIHLGH). Position 577 (Glu-577) interacts with L-isoleucyl-5'-AMP. A 'KMSKS' region motif is present at residues 618–622 (KMSKS). Residue Lys-621 coordinates ATP. Zn(2+) contacts are provided by Cys-906, Cys-909, Cys-926, and Cys-929.

This sequence belongs to the class-I aminoacyl-tRNA synthetase family. IleS type 1 subfamily. In terms of assembly, monomer. Zn(2+) serves as cofactor.

The protein resides in the cytoplasm. The enzyme catalyses tRNA(Ile) + L-isoleucine + ATP = L-isoleucyl-tRNA(Ile) + AMP + diphosphate. Its function is as follows. Catalyzes the attachment of isoleucine to tRNA(Ile). As IleRS can inadvertently accommodate and process structurally similar amino acids such as valine, to avoid such errors it has two additional distinct tRNA(Ile)-dependent editing activities. One activity is designated as 'pretransfer' editing and involves the hydrolysis of activated Val-AMP. The other activity is designated 'posttransfer' editing and involves deacylation of mischarged Val-tRNA(Ile). This chain is Isoleucine--tRNA ligase, found in Xanthomonas campestris pv. campestris (strain 8004).